We begin with the raw amino-acid sequence, 492 residues long: MTSLTLYLIIFSIILYLFVNRNKRKNLKIPGPNGIPIFGNLLSLSGEMHLTLQEWYKTYGSVFSIRMGNIDTVVLTEYPTIRKAFVDNSLAFASRYQLKSRVVLTGAKDLAIQNGEIHSLLKKVVLSEMTTTKIKRMEIHIIKETEKILKILDKHAERGEPFIINNYLNMFSMNVILRFLLGIDYPYENVDETVGYVKSIKSFFAVAGLPILSDFIPIPLKKSGVFFDSYKELEIETDKLIEKFKKSRNEKIENGTYNEEEDESILSKLLKEYEHGNITWECVSHTCIDIISAGTDTSANTLVMALIELINNQEIQSKAFSSIRSSCLNDSNDDDDDDEIVITHSKYRSLLPYISMIIKETFRKHPIALLGLPHVTTEDVEIDGYKIEAGTYIIQNIFSSHRSDKIFQSPNEFIPERFFESSQNQGLIHFGLGVRDCVGKSLAECEIFTLIATLLNRYQFINPNNSKKLNDIGTFGLAQVCPDTNIILKKRI.

A helical membrane pass occupies residues 1–21 (MTSLTLYLIIFSIILYLFVNR). Cysteine 437 is a heme binding site.

The protein belongs to the cytochrome P450 family. Heme serves as cofactor.

It is found in the membrane. The protein is Probable cytochrome P450 513A3 (cyp513A3) of Dictyostelium discoideum (Social amoeba).